Reading from the N-terminus, the 311-residue chain is tRNA dimethylallyltransferase (311 aa).

10-17 (GPTAVGKT) is an ATP binding site. 12-17 (TAVGKT) contributes to the substrate binding site. The interaction with substrate tRNA stretch occupies residues 35-38 (DSMQ).

The protein belongs to the IPP transferase family. Monomer. Mg(2+) is required as a cofactor.

The enzyme catalyses adenosine(37) in tRNA + dimethylallyl diphosphate = N(6)-dimethylallyladenosine(37) in tRNA + diphosphate. Catalyzes the transfer of a dimethylallyl group onto the adenine at position 37 in tRNAs that read codons beginning with uridine, leading to the formation of N6-(dimethylallyl)adenosine (i(6)A). The polypeptide is tRNA dimethylallyltransferase (Anoxybacillus flavithermus (strain DSM 21510 / WK1)).